A 143-amino-acid chain; its full sequence is Transcriptional regulator MraZ (143 aa).

SpoVT-AbrB domains follow at residues 5 to 47 and 76 to 119; these read EYEH…TLEE and AVEV…DRAS.

It belongs to the MraZ family. In terms of assembly, forms oligomers.

Its subcellular location is the cytoplasm. The protein localises to the nucleoid. The protein is Transcriptional regulator MraZ of Staphylococcus carnosus (strain TM300).